The primary structure comprises 192 residues: Cytochrome b-245 light chain (192 aa).

Topologically, residues 2 to 7 (GQIEWA) are cytoplasmic. A helical membrane pass occupies residues 8-30 (MWANEQALASGLILITGGIVATA). Over 31 to 35 (GQFAQ) the chain is Extracellular. A helical transmembrane segment spans residues 36–53 (WYLGAYSIAAGVLICLLE). Over 54-69 (YPRGKRSKGSTMERCG) the chain is Cytoplasmic. The stretch at 70 to 80 (QKYLTRAVKVF) is an intramembrane region. Over 81-86 (GPLTSN) the chain is Cytoplasmic. A helical transmembrane segment spans residues 87–104 (YYIRAFLHLGLSVPAGFL). A topological domain (extracellular) is located at residue L105. The chain crosses the membrane as a helical span at residues 106–126 (ATILGTACLAIASSIYLLAAI). Residues 127 to 192 (HGEHWTPIET…NPMPVTDEVV (66 aa)) are Cytoplasmic-facing. Residues 134 to 192 (IETKPKERPQVGGTIKQPPSNPPPRPPAEARKKPSEEEVAGVPGGGPQENPMPVTDEVV) are disordered. Phosphothreonine is present on T147. K149 participates in a covalent cross-link: Glycyl lysine isopeptide (Lys-Gly) (interchain with G-Cter in ubiquitin). S168 bears the Phosphoserine mark.

The protein belongs to the p22phox family. As to quaternary structure, component of the phagocyte NADPH oxidase core complex/cytochrome b558 complex, composed of CYBB (heavy chain (beta)) and CYBA (light chain (alpha)). Component of the phagocyte NADPH oxidase complex composed of an obligatory core heterodimer formed by the membrane proteins CYBA and CYBB and the cytosolic regulatory subunits NCF1/p47-phox, NCF2/p67-phox, NCF4/p40-phox and the small GTPase RAC1 or RAC2. Interacts with NCF1 (via SH3 domain). Interacts with SH3PXD2A. Interacts with DUOX1, DUOX2 and TPO. Interacts with NOX4; this interaction mediates superoxide generation. Interacts with calprotectin (S100A8/9). Interacts with GBP7. Interacts with NOXO1. Forms a heterodimer with NOX3 and is essential for activity and cell membrane localization of NOX3. Interacts with NOX1. In terms of processing, phosphorylation at Thr-147 enhances NADPH oxidase activity by promoting NCF1/p47-phox binding. Ubiquitinated at Lys-149 likely by RNF145.

The protein localises to the cell membrane. In terms of biological role, subunit of NADPH oxidase complexes that is required for the NADPH oxidase activity that generates, in various cell types, superoxide from molecular oxygen utilizing NADPH as an electron donor. Subunit of the phagocyte NADPH oxidase complex that mediates the transfer of electrons from cytosolic NADPH to O2 to produce the superoxide anion (O2(-)). In the activated complex, electrons are first transferred from NADPH to flavin adenine dinucleotide (FAD) and subsequently transferred via two heme molecules to molecular oxygen, producing superoxide through an outer-sphere reaction. Activation of the NADPH oxidase complex is initiated by the assembly of cytosolic subunits of the NADPH oxidase complex with the core NADPH oxidase complex to form a complex at the plasma membrane or phagosomal membrane. This activation process is initiated by phosphorylation dependent binding of the cytosolic NCF1/p47-phox subunit to the C-terminus of CYBA/p22-phox. Aassociates with NOX3 to form a functional NADPH oxidase constitutively generating superoxide. The polypeptide is Cytochrome b-245 light chain (Tursiops truncatus (Atlantic bottle-nosed dolphin)).